Here is a 615-residue protein sequence, read N- to C-terminus: RUN domain-containing protein 1 (615 aa).

The disordered stretch occupies residues 15–41 (TAVGPKAKDEEEEEEEEESLPPCETVR). Residues 24 to 33 (EEEEEEEEES) are compositionally biased toward acidic residues. The residue at position 73 (Ser73) is a Phosphoserine. Coiled coils occupy residues 76–102 (DATV…LSSH) and 163–238 (RVRG…NLNE). A disordered region spans residues 147-180 (DPCGGDESDVLPGDRPRVRGEDQSEQEKRERLET). Over residues 158-180 (PGDRPRVRGEDQSEQEKRERLET) the composition is skewed to basic and acidic residues. Positions 423 to 604 (ELTTVVRKEL…LKFSLPVDLA (182 aa)) constitute an RUN domain. Position 499 is a phosphoserine (Ser499).

May play a role as p53/TP53 inhibitor and thus may have oncogenic activity. The sequence is that of RUN domain-containing protein 1 (Rundc1) from Mus musculus (Mouse).